Consider the following 149-residue polypeptide: SsrA-binding protein (149 aa).

This sequence belongs to the SmpB family.

It localises to the cytoplasm. Required for rescue of stalled ribosomes mediated by trans-translation. Binds to transfer-messenger RNA (tmRNA), required for stable association of tmRNA with ribosomes. tmRNA and SmpB together mimic tRNA shape, replacing the anticodon stem-loop with SmpB. tmRNA is encoded by the ssrA gene; the 2 termini fold to resemble tRNA(Ala) and it encodes a 'tag peptide', a short internal open reading frame. During trans-translation Ala-aminoacylated tmRNA acts like a tRNA, entering the A-site of stalled ribosomes, displacing the stalled mRNA. The ribosome then switches to translate the ORF on the tmRNA; the nascent peptide is terminated with the 'tag peptide' encoded by the tmRNA and targeted for degradation. The ribosome is freed to recommence translation, which seems to be the essential function of trans-translation. This Fervidobacterium nodosum (strain ATCC 35602 / DSM 5306 / Rt17-B1) protein is SsrA-binding protein.